Reading from the N-terminus, the 314-residue chain is tRNA pseudouridine synthase B (314 aa).

His-43 contributes to the substrate binding site. The active-site Nucleophile is the Asp-48. Positions 76, 179, and 200 each coordinate substrate.

It belongs to the pseudouridine synthase TruB family. Type 1 subfamily.

The enzyme catalyses uridine(55) in tRNA = pseudouridine(55) in tRNA. Responsible for synthesis of pseudouridine from uracil-55 in the psi GC loop of transfer RNAs. The protein is tRNA pseudouridine synthase B of Shigella flexneri.